The following is a 201-amino-acid chain: Holliday junction branch migration complex subunit RuvA (201 aa).

The tract at residues 1-64 is domain I; it reads MYEYIRGQFQ…EDFIGLYGFT (64 aa). Residues 65–143 form a domain II region; sequence TREELEMFKL…PDELTSEEGE (79 aa). Residues 144–152 form a flexible linker region; that stretch reads LIEGINDNS. The domain III stretch occupies residues 153-201; sequence DYSFNINETLSALMALGYTEKEAQKALEKVDKTLSIENMIKESLKLLMR.

Belongs to the RuvA family. As to quaternary structure, homotetramer. Forms an RuvA(8)-RuvB(12)-Holliday junction (HJ) complex. HJ DNA is sandwiched between 2 RuvA tetramers; dsDNA enters through RuvA and exits via RuvB. An RuvB hexamer assembles on each DNA strand where it exits the tetramer. Each RuvB hexamer is contacted by two RuvA subunits (via domain III) on 2 adjacent RuvB subunits; this complex drives branch migration. In the full resolvosome a probable DNA-RuvA(4)-RuvB(12)-RuvC(2) complex forms which resolves the HJ.

The protein localises to the cytoplasm. In terms of biological role, the RuvA-RuvB-RuvC complex processes Holliday junction (HJ) DNA during genetic recombination and DNA repair, while the RuvA-RuvB complex plays an important role in the rescue of blocked DNA replication forks via replication fork reversal (RFR). RuvA specifically binds to HJ cruciform DNA, conferring on it an open structure. The RuvB hexamer acts as an ATP-dependent pump, pulling dsDNA into and through the RuvAB complex. HJ branch migration allows RuvC to scan DNA until it finds its consensus sequence, where it cleaves and resolves the cruciform DNA. This is Holliday junction branch migration complex subunit RuvA from Clostridium perfringens (strain ATCC 13124 / DSM 756 / JCM 1290 / NCIMB 6125 / NCTC 8237 / Type A).